The sequence spans 220 residues: Deoxyribose-phosphate aldolase (220 aa).

Asp89 serves as the catalytic Proton donor/acceptor. The active-site Schiff-base intermediate with acetaldehyde is the Lys151. Lys180 acts as the Proton donor/acceptor in catalysis.

It belongs to the DeoC/FbaB aldolase family. DeoC type 1 subfamily.

It is found in the cytoplasm. The enzyme catalyses 2-deoxy-D-ribose 5-phosphate = D-glyceraldehyde 3-phosphate + acetaldehyde. Its pathway is carbohydrate degradation; 2-deoxy-D-ribose 1-phosphate degradation; D-glyceraldehyde 3-phosphate and acetaldehyde from 2-deoxy-alpha-D-ribose 1-phosphate: step 2/2. Catalyzes a reversible aldol reaction between acetaldehyde and D-glyceraldehyde 3-phosphate to generate 2-deoxy-D-ribose 5-phosphate. This Staphylococcus epidermidis (strain ATCC 35984 / DSM 28319 / BCRC 17069 / CCUG 31568 / BM 3577 / RP62A) protein is Deoxyribose-phosphate aldolase.